A 94-amino-acid polypeptide reads, in one-letter code: Ammonia regulation of amino acid uptake protein (94 aa).

2 repeats span residues 48 to 57 and 58 to 67; these read HHQIRRRTHQ.

In terms of biological role, involved in ammonia regulation of the GAP1 permease. This Saccharomyces cerevisiae (strain ATCC 204508 / S288c) (Baker's yeast) protein is Ammonia regulation of amino acid uptake protein (AUA1).